The primary structure comprises 266 residues: UPF0246 protein PHZ_c0561 (266 aa).

A disordered region spans residues 245–266; it reads DEEFTFARPQPPPPAASRNKED.

It belongs to the UPF0246 family.

The polypeptide is UPF0246 protein PHZ_c0561 (Phenylobacterium zucineum (strain HLK1)).